The chain runs to 193 residues: MRLCDTDIERHLDEGKIVIEPRPGIERISGVSVDVLLGNEFRVFRDHTAPYIDLSGPSSEMADAIDRVMSDEIHVPDGEAFYLHPGQLALAVTYESVTLPADIVGWLDGRSSLARLGLMVHVTAHRIDPGWSGRIVLEFYNGGKLPLALRPKMKIGALNFEMLSGVAARPYNKRENAKYKSQQGAVASRINQD.

DCTP contacts are provided by residues 110-115 (RSSLAR), D128, 136-138 (VLE), Y171, K178, and Q182. The active-site Proton donor/acceptor is E138.

Belongs to the dCTP deaminase family. As to quaternary structure, homotrimer.

It carries out the reaction dCTP + H2O + H(+) = dUTP + NH4(+). It functions in the pathway pyrimidine metabolism; dUMP biosynthesis; dUMP from dCTP (dUTP route): step 1/2. Its function is as follows. Catalyzes the deamination of dCTP to dUTP. In Aeromonas hydrophila subsp. hydrophila (strain ATCC 7966 / DSM 30187 / BCRC 13018 / CCUG 14551 / JCM 1027 / KCTC 2358 / NCIMB 9240 / NCTC 8049), this protein is dCTP deaminase.